Reading from the N-terminus, the 164-residue chain is Coenzyme Q-binding protein coq10, mitochondrial (164 aa).

It belongs to the COQ10 family. As to quaternary structure, interacts with coenzyme Q.

The protein localises to the mitochondrion inner membrane. In terms of biological role, required for the function of coenzyme Q in the respiratory chain. May serve as a chaperone or may be involved in the transport of Q6 from its site of synthesis to the catalytic sites of the respiratory complexes. This chain is Coenzyme Q-binding protein coq10, mitochondrial, found in Schizosaccharomyces pombe (strain 972 / ATCC 24843) (Fission yeast).